The primary structure comprises 523 residues: Flavonoid 3',5'-hydroxylase (523 aa).

Position 460 (cysteine 460) interacts with heme.

The protein belongs to the cytochrome P450 family. Requires heme as cofactor.

It catalyses the reaction a 3',5'-unsubstituted flavanone + 2 reduced [NADPH--hemoprotein reductase] + 2 O2 = a 3',5'-dihydroxyflavanone + 2 oxidized [NADPH--hemoprotein reductase] + 2 H2O + 2 H(+). It functions in the pathway pigment biosynthesis; anthocyanin biosynthesis. Catalyzes the 3'5'-hydroxylation of naringenin and eriodictyol to form 5,7,3,'4',5'-pentahydroxyflavanone and 3',5'-hydroxylation of dihydrokaempferol and dihydroquercetin to form dihydromyricetin. This chain is Flavonoid 3',5'-hydroxylase (CYP75A6), found in Campanula medium (Canterbury bells).